The sequence spans 442 residues: UDP-glycosyltransferase 79B7 (442 aa).

Residues serine 260, 319 to 321 (VQQ), 336 to 344 (HCGPGTIWE), and 358 to 361 (LSDQ) each bind UDP-alpha-D-glucose.

Belongs to the UDP-glycosyltransferase family.

This Arabidopsis thaliana (Mouse-ear cress) protein is UDP-glycosyltransferase 79B7 (UGT79B7).